We begin with the raw amino-acid sequence, 457 residues long: Cyanidin 3-O-galactoside 2''-O-xylosyltransferase FGGT1 (457 aa).

The protein belongs to the UDP-glycosyltransferase family. In terms of tissue distribution, expressed in ovaries.

It carries out the reaction cyanidin 3-O-beta-D-galactoside + UDP-alpha-D-xylose = cyanidin 3-O-[beta-D-xylosyl-(1-&gt;2)-beta-D-galactoside] + UDP + H(+). It participates in pigment biosynthesis; anthocyanin biosynthesis. Its function is as follows. Xylosyltransferase involved in anthocyanin biosynthesis by catalyzing the xylosylation of cyanidin 3-O-galactoside to form cyanidin 3-O-[2-O-(-xylosyl)-galactoside]. Required for the accumulation of anthocyanin in red-fleshed kiwifruit varieties. The chain is Cyanidin 3-O-galactoside 2''-O-xylosyltransferase FGGT1 from Actinidia chinensis var. chinensis (Chinese soft-hair kiwi).